The chain runs to 224 residues: Large ribosomal subunit protein uL1m (224 aa).

It belongs to the universal ribosomal protein uL1 family.

The protein resides in the mitochondrion. The polypeptide is Large ribosomal subunit protein uL1m (RPL1) (Reclinomonas americana).